A 451-amino-acid polypeptide reads, in one-letter code: Trigger factor (451 aa).

Positions 170–256 (DHIATIDYCE…LTALKYKDLP (87 aa)) constitute a PPIase FKBP-type domain.

This sequence belongs to the FKBP-type PPIase family. Tig subfamily.

Its subcellular location is the cytoplasm. It carries out the reaction [protein]-peptidylproline (omega=180) = [protein]-peptidylproline (omega=0). Functionally, involved in protein export. Acts as a chaperone by maintaining the newly synthesized protein in an open conformation. Functions as a peptidyl-prolyl cis-trans isomerase. The chain is Trigger factor from Treponema denticola (strain ATCC 35405 / DSM 14222 / CIP 103919 / JCM 8153 / KCTC 15104).